We begin with the raw amino-acid sequence, 318 residues long: Ribose-phosphate pyrophosphokinase 1 (318 aa).

96-101 (RQDKKD) lines the ATP pocket. Asp-128, His-130, Asp-139, and Asp-143 together coordinate Mg(2+). Residue His-130 participates in ATP binding. Residues 212 to 227 (KDRVAILVDDMADTCG) are binding of phosphoribosylpyrophosphate.

The protein belongs to the ribose-phosphate pyrophosphokinase family. In terms of assembly, homodimer. The active form is probably a hexamer composed of 3 homodimers. Requires Mg(2+) as cofactor.

The catalysed reaction is D-ribose 5-phosphate + ATP = 5-phospho-alpha-D-ribose 1-diphosphate + AMP + H(+). It functions in the pathway metabolic intermediate biosynthesis; 5-phospho-alpha-D-ribose 1-diphosphate biosynthesis; 5-phospho-alpha-D-ribose 1-diphosphate from D-ribose 5-phosphate (route I): step 1/1. Activated by magnesium and inorganic phosphate. Catalyzes the synthesis of phosphoribosylpyrophosphate (PRPP) that is essential for nucleotide synthesis. The protein is Ribose-phosphate pyrophosphokinase 1 (PRPS1) of Bos taurus (Bovine).